Consider the following 263-residue polypeptide: Outer membrane lipoprotein 3 (263 aa).

The N-terminal stretch at 1–19 is a signal peptide; it reads MKIMKLAGAVAIFSLFLTA. Cys20 carries the N-palmitoyl cysteine lipid modification. Cys20 is lipidated: S-diacylglycerol cysteine.

Belongs to the NlpA lipoprotein family.

The protein localises to the cell outer membrane. The protein is Outer membrane lipoprotein 3 (plpC) of Mannheimia haemolytica (Pasteurella haemolytica).